The primary structure comprises 350 residues: MGDDIYIPPKPKPKPKPKPEYKYALWYFKYTNTYEKRFNGTVGDLLNRGFNYAIALEKDEGSGTPESGNLREDGEKDGKEFGEFINSELSGIKYIAQIPYYKRGMLEKLKNASKDKKQMEYYINHIYLVKRTLEYWKGWIDGVIESCDSNLVGFYWNFESPGQVSWGFITDWEIAQLSTYIKQKSNELNRKLEFIWIPYINDIENPDNNDIKRLSKYFDYVFVQPHYYIAWKYWCLWNYEKNVSEDIREYWKYQINRYNGYLTQGITKLIEVLNWIKEIPNGYIEMEVDNKIDEYKYHDLINKACDYIKAREFLTGRDIWQIRAYYFDTNIENVDKVRNGAYGIKGCKNW.

This is an uncharacterized protein from Methanocaldococcus jannaschii (strain ATCC 43067 / DSM 2661 / JAL-1 / JCM 10045 / NBRC 100440) (Methanococcus jannaschii).